A 706-amino-acid chain; its full sequence is Choline transporter-like protein 2 (706 aa).

Topologically, residues 1–33 (MGGERQHYYGKHGTPQKYDPTFKGPIYHRGCTD) are cytoplasmic. At Thr-14 the chain carries Phosphothreonine. A helical transmembrane segment spans residues 34-54 (VICCVFLLLAIVGYVAVGIIA). Topologically, residues 55–232 (WTHGDPRKVI…RIFEDYTVSW (178 aa)) are extracellular. Asn-187 and Asn-200 each carry an N-linked (GlcNAc...) asparagine glycan. Residues 233 to 253 (YWIIIGLVIAMVLSLLFIILL) traverse the membrane as a helical segment. Over 254–256 (RFL) the chain is Cytoplasmic. The helical transmembrane segment at 257–277 (AGIMVWVMIVMVILVLGYGIF) threads the bilayer. Residues 278-315 (HCYMEYSRLRGEAGSDISLVDLGFQTDLRVYLHLRQTW) lie on the Extracellular side of the membrane. Residues 316–336 (MAFMIILSILEVIIILLLIFL) traverse the membrane as a helical segment. Topologically, residues 337 to 364 (RKRILIAIALIKEASRAVGYVMCSMLYP) are cytoplasmic. A helical membrane pass occupies residues 365–385 (LVTFLLLCLCIAYWASTAIFL). Topologically, residues 386-440 (STSNEAVYKIFSDTDCQAVGKTCNPENFSSSSEFHLCPGAHCQFAFYGGESTYHR) are extracellular. Residues 441–461 (ALLGLQIFNAFMFFWLANFVL) form a helical membrane-spanning segment. The Cytoplasmic segment spans residues 462-504 (ALGQVTLAGAFASYYWALKKPDDLPAFPLFSAFGRALRYHTGS). A helical membrane pass occupies residues 505–525 (LAFGSLLLAIVQIIRVMLEYL). The Extracellular portion of the chain corresponds to 526–563 (DQRLKAAENKFAKFLMTCLKCCFWCLEKFIKFLNRNAY). The helical transmembrane segment at 564–584 (IMIAIYGTNFCTSARNAFFLL) threads the bilayer. The Cytoplasmic portion of the chain corresponds to 585-599 (MRNIIRVAVLDKVTD). A helical transmembrane segment spans residues 600 to 620 (FLFLLGKLLIVGSVGILAFFF). Topologically, residues 621-638 (FTHRIRIVQDTAPPLNYY) are extracellular. A helical transmembrane segment spans residues 639–659 (WVPILTVIVGSYLIAHGFFSV). The Cytoplasmic portion of the chain corresponds to 660–706 (YGMCVDTLFLCFLEDLERNDGSMERPYFMSPTLKRLLNKTNRKPAES).

The protein belongs to the CTL (choline transporter-like) family. In terms of assembly, interacts with COCH. Post-translationally, N-glycosylated.

The protein resides in the cell membrane. It is found in the mitochondrion outer membrane. The enzyme catalyses choline(out) + n H(+)(in) = choline(in) + n H(+)(out). It carries out the reaction ethanolamine(out) + n H(+)(in) = ethanolamine(in) + n H(+)(out). Its function is as follows. Choline/H+ antiporter, mainly in mitochodria. Also acts as a low-affinity ethanolamine/H+ antiporter, regulating the supply of extracellular ethanolamine (Etn) for the CDP-Etn pathway, redistribute intracellular Etn and balance the CDP-Cho and CDP-Etn arms of the Kennedy pathway. This Sus scrofa (Pig) protein is Choline transporter-like protein 2 (SLC44A2).